The following is a 267-amino-acid chain: 1-(5-phosphoribosyl)-5-[(5-phosphoribosylamino)methylideneamino] imidazole-4-carboxamide isomerase (267 aa).

This sequence belongs to the HisA/HisF family.

It is found in the cytoplasm. The catalysed reaction is 1-(5-phospho-beta-D-ribosyl)-5-[(5-phospho-beta-D-ribosylamino)methylideneamino]imidazole-4-carboxamide = 5-[(5-phospho-1-deoxy-D-ribulos-1-ylimino)methylamino]-1-(5-phospho-beta-D-ribosyl)imidazole-4-carboxamide. It functions in the pathway amino-acid biosynthesis; L-histidine biosynthesis; L-histidine from 5-phospho-alpha-D-ribose 1-diphosphate: step 4/9. The chain is 1-(5-phosphoribosyl)-5-[(5-phosphoribosylamino)methylideneamino] imidazole-4-carboxamide isomerase (HIS6) from Kluyveromyces lactis (strain ATCC 8585 / CBS 2359 / DSM 70799 / NBRC 1267 / NRRL Y-1140 / WM37) (Yeast).